A 232-amino-acid chain; its full sequence is tRNA1(Val) (adenine(37)-N6)-methyltransferase (232 aa).

This sequence belongs to the methyltransferase superfamily. tRNA (adenine-N(6)-)-methyltransferase family.

It localises to the cytoplasm. The enzyme catalyses adenosine(37) in tRNA1(Val) + S-adenosyl-L-methionine = N(6)-methyladenosine(37) in tRNA1(Val) + S-adenosyl-L-homocysteine + H(+). Functionally, specifically methylates the adenine in position 37 of tRNA(1)(Val) (anticodon cmo5UAC). This is tRNA1(Val) (adenine(37)-N6)-methyltransferase from Haemophilus influenzae (strain PittEE).